Here is a 155-residue protein sequence, read N- to C-terminus: Small ribosomal subunit protein uS7 (155 aa).

It belongs to the universal ribosomal protein uS7 family. As to quaternary structure, part of the 30S ribosomal subunit. Contacts proteins S9 and S11.

Its function is as follows. One of the primary rRNA binding proteins, it binds directly to 16S rRNA where it nucleates assembly of the head domain of the 30S subunit. Is located at the subunit interface close to the decoding center, probably blocks exit of the E-site tRNA. In Xanthomonas oryzae pv. oryzae (strain MAFF 311018), this protein is Small ribosomal subunit protein uS7.